Consider the following 357-residue polypeptide: Peptide chain release factor 1 (357 aa).

An N5-methylglutamine modification is found at Q234. Positions 284 to 307 (KKQEQRSNDRKQQVGSGDRSERIR) are enriched in basic and acidic residues. A disordered region spans residues 284–313 (KKQEQRSNDRKQQVGSGDRSERIRTYNFPQ).

Belongs to the prokaryotic/mitochondrial release factor family. In terms of processing, methylated by PrmC. Methylation increases the termination efficiency of RF1.

The protein localises to the cytoplasm. Peptide chain release factor 1 directs the termination of translation in response to the peptide chain termination codons UAG and UAA. This Borrelia turicatae (strain 91E135) protein is Peptide chain release factor 1.